The primary structure comprises 358 residues: MAEKILNNDVLTSLQKKNRKQIQVWLYSILLLCLAIVLVGGATRLTGSGLSITDWRPIHGVIPPIGAEQWQEEFLKYQQIAQYKLLNRDMTLNAFKVIFWWEWAHRILGRLVGLLALLGLIWFWATKRIEKNILLKLTIVPILIAFQGAIGWWMVASGIGQSNLTSVSQYRLAFHLITACFIITFVTYLSRGFTEYSEKPANQRVQRFAGWLVVLILIEIYFGALVAGLHAGKVYNTWPLMDGQFIPDGLMQHNPVWLNLFENPLTIQFIHRFFAYFLFFVTIIHAFYVQKNIPHSTHSRRAFFICVMIVVQAFLGIITLLREVPIGLGLIHQSVALAILCFSVVHWRATKEAYRAVE.

8 helical membrane passes run 22–42 (IQVWLYSILLLCLAIVLVGGA), 107–127 (ILGRLVGLLALLGLIWFWATK), 139–159 (IVPILIAFQGAIGWWMVASGI), 173–193 (AFHLITACFIITFVTYLSRGF), 208–228 (FAGWLVVLILIEIYFGALVAG), 269–289 (FIHRFFAYFLFFVTIIHAFYV), 302–322 (AFFICVMIVVQAFLGIITLLR), and 324–344 (VPIGLGLIHQSVALAILCFSV). Position 271 (His271) interacts with heme. His332 provides a ligand contact to heme.

The protein belongs to the COX15/CtaA family. Type 2 subfamily. As to quaternary structure, interacts with CtaB. The cofactor is heme b.

It is found in the cell membrane. It catalyses the reaction Fe(II)-heme o + 2 A + H2O = Fe(II)-heme a + 2 AH2. The protein operates within porphyrin-containing compound metabolism; heme A biosynthesis; heme A from heme O: step 1/1. Its function is as follows. Catalyzes the conversion of heme O to heme A by two successive hydroxylations of the methyl group at C8. The first hydroxylation forms heme I, the second hydroxylation results in an unstable dihydroxymethyl group, which spontaneously dehydrates, resulting in the formyl group of heme A. The sequence is that of Heme A synthase from Bartonella quintana (strain Toulouse) (Rochalimaea quintana).